Consider the following 140-residue polypeptide: N14 matrix protein (140 aa).

The first 25 residues, 1–25, serve as a signal peptide directing secretion; it reads MACTLRLTIAALVLLGICHLSRPVA.

This sequence belongs to the N16 matrix protein family. Heterooligomer; disulfide-linked. Pif97, Pif80, N16 and other proteins form a complex. As to expression, component of conchiolin, the organic matrix of nacre. Only expressed in the dorsal region of the mantle.

It is found in the secreted. Its subcellular location is the extracellular space. The protein localises to the extracellular matrix. In terms of biological role, may be specifically involved in the formation of the nacreous layer. This is N14 matrix protein from Pinctada maxima (Silver-lipped pearl oyster).